The following is a 475-amino-acid chain: Ribulose bisphosphate carboxylase large chain (475 aa).

A propeptide spanning residues 1–2 (MS) is cleaved from the precursor. Pro-3 bears the N-acetylproline mark. N6,N6,N6-trimethyllysine is present on Lys-14. Substrate-binding residues include Asn-123 and Thr-173. Lys-175 functions as the Proton acceptor in the catalytic mechanism. Lys-177 contributes to the substrate binding site. Residues Lys-201, Asp-203, and Glu-204 each coordinate Mg(2+). Position 201 is an N6-carboxylysine (Lys-201). Residue His-294 is the Proton acceptor of the active site. Substrate is bound by residues Arg-295, His-327, and Ser-379.

This sequence belongs to the RuBisCO large chain family. Type I subfamily. As to quaternary structure, heterohexadecamer of 8 large chains and 8 small chains; disulfide-linked. The disulfide link is formed within the large subunit homodimers. The cofactor is Mg(2+). Post-translationally, the disulfide bond which can form in the large chain dimeric partners within the hexadecamer appears to be associated with oxidative stress and protein turnover.

The protein localises to the plastid. Its subcellular location is the chloroplast. The enzyme catalyses 2 (2R)-3-phosphoglycerate + 2 H(+) = D-ribulose 1,5-bisphosphate + CO2 + H2O. It catalyses the reaction D-ribulose 1,5-bisphosphate + O2 = 2-phosphoglycolate + (2R)-3-phosphoglycerate + 2 H(+). Its function is as follows. RuBisCO catalyzes two reactions: the carboxylation of D-ribulose 1,5-bisphosphate, the primary event in carbon dioxide fixation, as well as the oxidative fragmentation of the pentose substrate in the photorespiration process. Both reactions occur simultaneously and in competition at the same active site. This chain is Ribulose bisphosphate carboxylase large chain, found in Picea abies (Norway spruce).